Reading from the N-terminus, the 228-residue chain is Probable GTP-binding protein EngB (228 aa).

The EngB-type G domain occupies 48–222 (YGLEVAFVGY…QFVLNNWFSS (175 aa)). GTP contacts are provided by residues 56–63 (GYSNSGKS), 83–87 (GRTRL), 101–104 (DFPG), 168–171 (NKMD), and 201–203 (FSS). The Mg(2+) site is built by S63 and T85.

The protein belongs to the TRAFAC class TrmE-Era-EngA-EngB-Septin-like GTPase superfamily. EngB GTPase family. Mg(2+) is required as a cofactor.

In terms of biological role, necessary for normal cell division and for the maintenance of normal septation. In Buchnera aphidicola subsp. Baizongia pistaciae (strain Bp), this protein is Probable GTP-binding protein EngB.